We begin with the raw amino-acid sequence, 567 residues long: Urease subunit alpha (567 aa).

In terms of domain architecture, Urease spans 129–567 (GGVDSHIHFI…LPLAQRYFLF (439 aa)). Ni(2+) contacts are provided by His134, His136, and Lys217. Residue Lys217 is modified to N6-carboxylysine. Residue His219 participates in substrate binding. Residues His246 and His272 each coordinate Ni(2+). Residue His320 is the Proton donor of the active site. Asp360 is a Ni(2+) binding site.

The protein belongs to the metallo-dependent hydrolases superfamily. Urease alpha subunit family. As to quaternary structure, heterotrimer of UreA (gamma), UreB (beta) and UreC (alpha) subunits. Three heterotrimers associate to form the active enzyme. Ni cation serves as cofactor. In terms of processing, carboxylation allows a single lysine to coordinate two nickel ions.

The protein localises to the cytoplasm. The enzyme catalyses urea + 2 H2O + H(+) = hydrogencarbonate + 2 NH4(+). It participates in nitrogen metabolism; urea degradation; CO(2) and NH(3) from urea (urease route): step 1/1. The polypeptide is Urease subunit alpha (Pseudomonas putida (strain ATCC 47054 / DSM 6125 / CFBP 8728 / NCIMB 11950 / KT2440)).